A 159-amino-acid chain; its full sequence is Peptide methionine sulfoxide reductase MsrB (159 aa).

The region spanning 22–144 is the MsrB domain; sequence RERLEANLTA…NSVSLQFVKA (123 aa). Zn(2+)-binding residues include Cys-61, Cys-64, Cys-110, and Cys-113. The Nucleophile role is filled by Cys-133.

It belongs to the MsrB Met sulfoxide reductase family. Requires Zn(2+) as cofactor.

It carries out the reaction L-methionyl-[protein] + [thioredoxin]-disulfide + H2O = L-methionyl-(R)-S-oxide-[protein] + [thioredoxin]-dithiol. This Caulobacter vibrioides (strain ATCC 19089 / CIP 103742 / CB 15) (Caulobacter crescentus) protein is Peptide methionine sulfoxide reductase MsrB.